The sequence spans 276 residues: Undecaprenyl-diphosphatase (276 aa).

Transmembrane regions (helical) follow at residues 6 to 26 (IEIL…WLPI), 49 to 69 (EMFF…MFWN), 89 to 109 (FSLW…GILF), 117 to 137 (LHTP…FIVI), 151 to 171 (LADI…LSLI), 181 to 201 (IIGA…TFFL), 224 to 244 (AELL…VFVI), and 256 to 276 (FKVF…ITAI).

It belongs to the UppP family.

Its subcellular location is the cell membrane. It catalyses the reaction di-trans,octa-cis-undecaprenyl diphosphate + H2O = di-trans,octa-cis-undecaprenyl phosphate + phosphate + H(+). Catalyzes the dephosphorylation of undecaprenyl diphosphate (UPP). Confers resistance to bacitracin. This chain is Undecaprenyl-diphosphatase, found in Enterococcus faecalis (Streptococcus faecalis).